The sequence spans 253 residues: tRNA pseudouridine synthase A (253 aa).

D53 serves as the catalytic Nucleophile. Position 112 (Y112) interacts with substrate.

This sequence belongs to the tRNA pseudouridine synthase TruA family. Homodimer.

It catalyses the reaction uridine(38/39/40) in tRNA = pseudouridine(38/39/40) in tRNA. Its function is as follows. Formation of pseudouridine at positions 38, 39 and 40 in the anticodon stem and loop of transfer RNAs. This chain is tRNA pseudouridine synthase A, found in Lactococcus lactis subsp. cremoris (strain SK11).